The chain runs to 156 residues: MSELKQIRIYTDGSCLGNPGPGGYGVVMIYKQHRKELADGFALTTNNRMELLAPIVALESLKEPCDVILTSDSQYMRQGITEWIHGWKKKGWVTASKTPVKNVDLWQRLDAAAAKHKVDWRWVKGHAGHAENERCDTLAREAAEAKPTQIDKGYQP.

Positions 3–144 (ELKQIRIYTD…CDTLAREAAE (142 aa)) constitute an RNase H type-1 domain. Positions 12, 50, 72, and 136 each coordinate Mg(2+).

This sequence belongs to the RNase H family. In terms of assembly, monomer. Mg(2+) serves as cofactor.

The protein localises to the cytoplasm. It carries out the reaction Endonucleolytic cleavage to 5'-phosphomonoester.. Endonuclease that specifically degrades the RNA of RNA-DNA hybrids. The sequence is that of Ribonuclease H from Shewanella amazonensis (strain ATCC BAA-1098 / SB2B).